We begin with the raw amino-acid sequence, 326 residues long: tRNA uridine(34) hydroxylase (326 aa).

The Rhodanese domain maps to 123–217 (SDPDVILVDT…YLEEVKQEES (95 aa)). Residue Cys-177 is the Cysteine persulfide intermediate of the active site.

The protein belongs to the TrhO family.

The catalysed reaction is uridine(34) in tRNA + AH2 + O2 = 5-hydroxyuridine(34) in tRNA + A + H2O. Functionally, catalyzes oxygen-dependent 5-hydroxyuridine (ho5U) modification at position 34 in tRNAs. The protein is tRNA uridine(34) hydroxylase of Shewanella denitrificans (strain OS217 / ATCC BAA-1090 / DSM 15013).